The primary structure comprises 234 residues: Thiamine-phosphate synthase (234 aa).

4-amino-2-methyl-5-(diphosphooxymethyl)pyrimidine contacts are provided by residues 65–69 (QYRNK) and Asn97. Positions 98 and 117 each coordinate Mg(2+). A 4-amino-2-methyl-5-(diphosphooxymethyl)pyrimidine-binding site is contributed by Ser136. 2-[(2R,5Z)-2-carboxy-4-methylthiazol-5(2H)-ylidene]ethyl phosphate is bound at residue 163-165 (SHT). Lys166 contributes to the 4-amino-2-methyl-5-(diphosphooxymethyl)pyrimidine binding site. Residues Gly192 and 212–213 (IS) each bind 2-[(2R,5Z)-2-carboxy-4-methylthiazol-5(2H)-ylidene]ethyl phosphate.

Belongs to the thiamine-phosphate synthase family. Mg(2+) serves as cofactor.

The enzyme catalyses 2-[(2R,5Z)-2-carboxy-4-methylthiazol-5(2H)-ylidene]ethyl phosphate + 4-amino-2-methyl-5-(diphosphooxymethyl)pyrimidine + 2 H(+) = thiamine phosphate + CO2 + diphosphate. The catalysed reaction is 2-(2-carboxy-4-methylthiazol-5-yl)ethyl phosphate + 4-amino-2-methyl-5-(diphosphooxymethyl)pyrimidine + 2 H(+) = thiamine phosphate + CO2 + diphosphate. It carries out the reaction 4-methyl-5-(2-phosphooxyethyl)-thiazole + 4-amino-2-methyl-5-(diphosphooxymethyl)pyrimidine + H(+) = thiamine phosphate + diphosphate. Its pathway is cofactor biosynthesis; thiamine diphosphate biosynthesis; thiamine phosphate from 4-amino-2-methyl-5-diphosphomethylpyrimidine and 4-methyl-5-(2-phosphoethyl)-thiazole: step 1/1. Its function is as follows. Condenses 4-methyl-5-(beta-hydroxyethyl)thiazole monophosphate (THZ-P) and 2-methyl-4-amino-5-hydroxymethyl pyrimidine pyrophosphate (HMP-PP) to form thiamine monophosphate (TMP). The polypeptide is Thiamine-phosphate synthase (Xylella fastidiosa (strain Temecula1 / ATCC 700964)).